Here is a 567-residue protein sequence, read N- to C-terminus: Probable diguanylate cyclase DgcQ (567 aa).

A run of 2 helical transmembrane segments spans residues 20–40 (FGPG…STLL) and 357–377 (IALT…WGVI). Positions 425 to 560 (QPFSVIQLDL…GRNRICASDA (136 aa)) constitute a GGDEF domain. D433 serves as a coordination point for Mg(2+). Substrate is bound by residues N441, H446, and D450. Mg(2+) is bound at residue E476. Residue E476 is the Proton acceptor of the active site.

Homodimer. The cofactor is Mg(2+).

The protein localises to the cell inner membrane. The enzyme catalyses 2 GTP = 3',3'-c-di-GMP + 2 diphosphate. The protein operates within glycan metabolism; bacterial cellulose biosynthesis. It participates in purine metabolism; 3',5'-cyclic di-GMP biosynthesis. Its function is as follows. Catalyzes the synthesis of cyclic-di-GMP (c-di-GMP) via the condensation of 2 GTP molecules. Cyclic-di-GMP is a second messenger which controls cell surface-associated traits in bacteria. Involved in the regulation of cellulose production. This Salmonella typhi protein is Probable diguanylate cyclase DgcQ.